The sequence spans 1128 residues: Lysylphosphatidylglycerol biosynthesis bifunctional protein LysX (1128 aa).

Residues 1–47 (MDNPPPTGVAPRHLPPGSVHTGKVTASLSHRRPDSVQDAPPAPVPHR) form a disordered region. The tract at residues 1–632 (MDNPPPTGVA…GLHADGSPPD (632 aa)) is phosphatidylglycerol lysyltransferase. The next 6 helical transmembrane spans lie at 55–75 (VPHI…LWSL), 97–117 (APDT…AIAS), 121–141 (IAWW…GLRF), 147–167 (INAL…IAAW), 184–204 (GVLV…VEVF), and 240–260 (FVNV…VLTL). The disordered stretch occupies residues 619–644 (DTLTGLHADGSPPDWPKPDLLDSGPR). The lysine--tRNA ligase stretch occupies residues 633–1128 (WPKPDLLDSG…TLPFPLVKPR (496 aa)). The span at 634 to 644 (PKPDLLDSGPR) shows a compositional bias: basic and acidic residues. Residues D1040 and E1047 each contribute to the Mg(2+) site.

This sequence in the N-terminal section; belongs to the LPG synthetase family. It in the C-terminal section; belongs to the class-II aminoacyl-tRNA synthetase family. The cofactor is Mg(2+).

The protein resides in the cell membrane. It carries out the reaction tRNA(Lys) + L-lysine + ATP = L-lysyl-tRNA(Lys) + AMP + diphosphate. The enzyme catalyses L-lysyl-tRNA(Lys) + a 1,2-diacyl-sn-glycero-3-phospho-(1'-sn-glycerol) = a 1,2-diacyl-sn-glycero-3-phospho-1'-(3'-O-L-lysyl)-sn-glycerol + tRNA(Lys). In terms of biological role, catalyzes the production of L-lysyl-tRNA(Lys)transfer and the transfer of a lysyl group from L-lysyl-tRNA(Lys) to membrane-bound phosphatidylglycerol (PG), which produces lysylphosphatidylglycerol (LPG), one of the components of the bacterial membrane with a positive net charge. LPG synthesis contributes to the resistance to cationic antimicrobial peptides (CAMPs) and likely protects M.tuberculosis against the CAMPs produced by competiting microorganisms (bacteriocins). In fact, the modification of anionic phosphatidylglycerol with positively charged L-lysine results in repulsion of the peptides. This chain is Lysylphosphatidylglycerol biosynthesis bifunctional protein LysX (lysX), found in Nocardia farcinica (strain IFM 10152).